A 228-amino-acid chain; its full sequence is Urease accessory protein UreF 1 (228 aa).

This sequence belongs to the UreF family. In terms of assembly, ureD, UreF and UreG form a complex that acts as a GTP-hydrolysis-dependent molecular chaperone, activating the urease apoprotein by helping to assemble the nickel containing metallocenter of UreC. The UreE protein probably delivers the nickel.

The protein localises to the cytoplasm. Required for maturation of urease via the functional incorporation of the urease nickel metallocenter. In Brucella canis (strain ATCC 23365 / NCTC 10854 / RM-666), this protein is Urease accessory protein UreF 1.